A 255-amino-acid chain; its full sequence is Triosephosphate isomerase (255 aa).

Residue 9 to 11 (NWK) coordinates substrate. His95 (electrophile) is an active-site residue. Glu167 functions as the Proton acceptor in the catalytic mechanism. Substrate is bound by residues Gly173, Ser212, and 233 to 234 (GG).

The protein belongs to the triosephosphate isomerase family. In terms of assembly, homodimer.

The protein resides in the cytoplasm. The enzyme catalyses D-glyceraldehyde 3-phosphate = dihydroxyacetone phosphate. The protein operates within carbohydrate biosynthesis; gluconeogenesis. Its pathway is carbohydrate degradation; glycolysis; D-glyceraldehyde 3-phosphate from glycerone phosphate: step 1/1. Its function is as follows. Involved in the gluconeogenesis. Catalyzes stereospecifically the conversion of dihydroxyacetone phosphate (DHAP) to D-glyceraldehyde-3-phosphate (G3P). The protein is Triosephosphate isomerase of Pectobacterium atrosepticum (strain SCRI 1043 / ATCC BAA-672) (Erwinia carotovora subsp. atroseptica).